The following is a 109-amino-acid chain: uncharacterized protein (109 aa).

Residues 75-95 (MALFHTVFILWPHFCGILWTV) traverse the membrane as a helical segment.

The protein localises to the membrane. This is an uncharacterized protein from Saccharomyces cerevisiae (strain ATCC 204508 / S288c) (Baker's yeast).